The primary structure comprises 196 residues: MQLKRVAEAKLPTPLGDFLMVGFEELATGHDHAALVFGDISGKTPVLARVHSECLTGDALFSLRCDCGFQLEAALTHIAEEGRGILIYHRQEGRNIGLLNKIRAYALQDQGYDTVEANHQLGFAADERDFTLCADMFKLLGVDEVRLLTNNPKKVEILTEAGINIVERVPLIVGRNPNNEHYLDTKAAKMGHLLSK.

49 to 53 (RVHSE) serves as a coordination point for GTP. Residues Cys-54, Cys-65, and Cys-67 each coordinate Zn(2+). Residues Gln-70, 92–94 (EGR), and Thr-114 each bind GTP. Asp-126 serves as the catalytic Proton acceptor. Residue Arg-128 is the Nucleophile of the active site. GTP contacts are provided by Thr-149 and Lys-154.

The protein belongs to the GTP cyclohydrolase II family. As to quaternary structure, homodimer. Zn(2+) serves as cofactor.

It catalyses the reaction GTP + 4 H2O = 2,5-diamino-6-hydroxy-4-(5-phosphoribosylamino)-pyrimidine + formate + 2 phosphate + 3 H(+). It participates in cofactor biosynthesis; riboflavin biosynthesis; 5-amino-6-(D-ribitylamino)uracil from GTP: step 1/4. Its function is as follows. Catalyzes the conversion of GTP to 2,5-diamino-6-ribosylamino-4(3H)-pyrimidinone 5'-phosphate (DARP), formate and pyrophosphate. This is GTP cyclohydrolase-2 from Salmonella choleraesuis (strain SC-B67).